The following is a 176-amino-acid chain: ATP-dependent protease subunit HslV (176 aa).

Residue Thr-2 is part of the active site. Residues Gly-157, Cys-160, and Thr-163 each contribute to the Na(+) site.

It belongs to the peptidase T1B family. HslV subfamily. A double ring-shaped homohexamer of HslV is capped on each side by a ring-shaped HslU homohexamer. The assembly of the HslU/HslV complex is dependent on binding of ATP.

Its subcellular location is the cytoplasm. It catalyses the reaction ATP-dependent cleavage of peptide bonds with broad specificity.. Allosterically activated by HslU binding. Protease subunit of a proteasome-like degradation complex believed to be a general protein degrading machinery. The sequence is that of ATP-dependent protease subunit HslV from Pectobacterium atrosepticum (strain SCRI 1043 / ATCC BAA-672) (Erwinia carotovora subsp. atroseptica).